The chain runs to 512 residues: Serine/threonine-protein kinase SSN3 (512 aa).

Disordered stretches follow at residues Met-1–Trp-22 and Ala-75–Met-94. The Protein kinase domain occupies Tyr-106–Phe-455. Residues Ile-112 to Val-120 and Lys-136 contribute to the ATP site. Asp-238 serves as the catalytic Proton acceptor. Disordered regions lie at residues Gln-368–Ala-388 and Arg-476–Gly-512. A compositionally biased stretch (basic residues) spans His-373 to Gln-382. Composition is skewed to basic and acidic residues over residues Arg-476–Ile-485 and Gly-497–Gly-512.

The protein belongs to the protein kinase superfamily. CMGC Ser/Thr protein kinase family. CDC2/CDKX subfamily. In terms of assembly, component of the SRB8-11 complex, a regulatory module of the Mediator complex. The cofactor is Mg(2+).

Its subcellular location is the nucleus. It carries out the reaction L-seryl-[protein] + ATP = O-phospho-L-seryl-[protein] + ADP + H(+). It catalyses the reaction L-threonyl-[protein] + ATP = O-phospho-L-threonyl-[protein] + ADP + H(+). The enzyme catalyses [DNA-directed RNA polymerase] + ATP = phospho-[DNA-directed RNA polymerase] + ADP + H(+). In terms of biological role, component of the SRB8-11 complex. The SRB8-11 complex is a regulatory module of the Mediator complex which is itself involved in regulation of basal and activated RNA polymerase II-dependent transcription. The SRB8-11 complex may be involved in the transcriptional repression of a subset of genes regulated by Mediator. It may inhibit the association of the Mediator complex with RNA polymerase II to form the holoenzyme complex. The SRB8-11 complex phosphorylates the C-terminal domain (CTD) of the largest subunit of RNA polymerase II. The protein is Serine/threonine-protein kinase SSN3 (SSN3) of Chaetomium globosum (strain ATCC 6205 / CBS 148.51 / DSM 1962 / NBRC 6347 / NRRL 1970) (Soil fungus).